The sequence spans 257 residues: Snake venom serine protease Dav-KN (257 aa).

A signal peptide spans 1–18 (MVLIRVLANLLILQLSYA). Positions 19-24 (QKSSEL) are excised as a propeptide. The region spanning 25-248 (VIGGDECNIN…HLDWIKGIIA (224 aa)) is the Peptidase S1 domain. Disulfide bonds link Cys-31/Cys-162, Cys-49/Cys-65, Cys-97/Cys-255, Cys-173/Cys-188, and Cys-199/Cys-224. Active-site charge relay system residues include His-64 and Asp-109. Ser-203 (charge relay system) is an active-site residue.

The protein belongs to the peptidase S1 family. Snake venom subfamily. As to quaternary structure, monomer. Expressed by the venom gland.

The protein resides in the secreted. In terms of biological role, snake venom serine protease that may act in the hemostasis system of the prey. In Deinagkistrodon acutus (Hundred-pace snake), this protein is Snake venom serine protease Dav-KN.